The following is a 585-amino-acid chain: Rab GTPase-binding effector protein 2 (585 aa).

Alanine 2 is subject to N-acetylalanine. A coiled-coil region spans residues 27-183; sequence QEGAKVEAES…ELIQEIQRRP (157 aa). Disordered regions lie at residues 178–265, 381–408, and 491–515; these read EIQR…ASLV, ENQG…EESL, and EEQS…EEAQ. Residues serine 188, serine 192, serine 198, and serine 202 each carry the phosphoserine modification. Residues 288–540 adopt a coiled-coil conformation; sequence NQWEQLQLEG…QAELETSEQV (253 aa). A compositionally biased stretch (basic and acidic residues) spans 491–501; that stretch reads EEQSKAKRQEV.

This sequence belongs to the rabaptin family. In terms of assembly, heterodimer with RABGEF1. The dimer binds RAB5A that has been activated by GTP-binding. Interacts with SDCCAG8; this interaction is important for ciliogenesis regulation. Interacts with RAB4; this interaction may mediate VEGFR2 cell surface expression.

Its subcellular location is the cytoplasm. It is found in the early endosome. The protein resides in the cytoskeleton. It localises to the microtubule organizing center. The protein localises to the centrosome. Its subcellular location is the cilium basal body. Functionally, plays a role in membrane trafficking and in homotypic early endosome fusion. Participates in arteriogenesis by regulating vascular endothelial growth factor receptor 2/VEGFR2 cell surface expression and endosomal trafficking. By interacting with SDCCAG8, localizes to centrosomes and plays a critical role in ciliogenesis. This chain is Rab GTPase-binding effector protein 2 (RABEP2), found in Bos taurus (Bovine).